Here is a 169-residue protein sequence, read N- to C-terminus: Peptide deformylase 1 (169 aa).

Fe cation-binding residues include cysteine 93 and histidine 135. The active site involves glutamate 136. Histidine 139 provides a ligand contact to Fe cation.

This sequence belongs to the polypeptide deformylase family. Fe(2+) serves as cofactor.

The enzyme catalyses N-terminal N-formyl-L-methionyl-[peptide] + H2O = N-terminal L-methionyl-[peptide] + formate. Removes the formyl group from the N-terminal Met of newly synthesized proteins. Requires at least a dipeptide for an efficient rate of reaction. N-terminal L-methionine is a prerequisite for activity but the enzyme has broad specificity at other positions. This is Peptide deformylase 1 from Corynebacterium efficiens (strain DSM 44549 / YS-314 / AJ 12310 / JCM 11189 / NBRC 100395).